We begin with the raw amino-acid sequence, 92 residues long: C-C motif chemokine 3 (92 aa).

The N-terminal stretch at 1–23 (MKVSTTALAVLLCTMTLCNQVFS) is a signal peptide. Intrachain disulfides connect Cys-34-Cys-57 and Cys-35-Cys-73.

It belongs to the intercrine beta (chemokine CC) family. In terms of assembly, self-associates. Also heterodimer of MIP-1-alpha(4-69) and MIP-1-beta(3-69). Interacts with CCR1. Expressed in lung, spleen, and pancreas.

The protein resides in the secreted. In terms of biological role, monokine with inflammatory and chemokinetic properties. Binds to CCR1, CCR4 and CCR5. One of the major HIV-suppressive factors produced by CD8+ T-cells. Recombinant MIP-1-alpha induces a dose-dependent inhibition of different strains of HIV-1, HIV-2, and simian immunodeficiency virus (SIV). The chain is C-C motif chemokine 3 (Ccl3) from Mus musculus (Mouse).